The primary structure comprises 287 residues: Mu-like prophage FluMu DNA transposition protein B (287 aa).

One can recognise an HTH cro/C1-type domain in the interval 7-62 (LKQHLSDSQITQAQLAREAGVNAGALSAYLNDNYKGNIADVEAKLAAYLEKKAVQA). The H-T-H motif DNA-binding region spans 18–37 (QAQLAREAGVNAGALSAYLN). Residue 98–105 (GMSGVGKT) coordinates ATP.

Functionally, this protein is a non-specific DNA-binding and ATP-hydrolyzing protein essential for bacteriophage integration and replication. The polypeptide is Mu-like prophage FluMu DNA transposition protein B (Haemophilus influenzae (strain ATCC 51907 / DSM 11121 / KW20 / Rd)).